The primary structure comprises 199 residues: Early activation antigen CD69 (199 aa).

Residues 1–14 (MDSENCSITENSSS) show a composition bias toward polar residues. A disordered region spans residues 1-20 (MDSENCSITENSSSHLERGQ). Topologically, residues 1–40 (MDSENCSITENSSSHLERGQKDHGTSIHFEKHHEGSIQVS) are cytoplasmic. Residues 41–61 (IPWAVLIVVLITSLIIALIAL) form a helical; Signal-anchor for type II membrane protein membrane-spanning segment. Topologically, residues 62–199 (NVGKYNCPGL…FHWVCSKPSR (138 aa)) are extracellular. Intrachain disulfides connect cysteine 85-cysteine 96, cysteine 113-cysteine 194, and cysteine 173-cysteine 186. The 104-residue stretch at 92–195 (YKRTCYFFST…CEANFHWVCS (104 aa)) folds into the C-type lectin domain. 3 N-linked (GlcNAc...) asparagine glycosylation sites follow: asparagine 150, asparagine 166, and asparagine 180.

Homodimer; disulfide-linked. Interacts with S100A8 and S100A9. Interacts with galactin-1/LGALS1. Interacts with S1PR1; this interaction mediates S1PR1 degradation. Interacts with JAK3 and STAT5. Post-translationally, constitutive Ser/Thr phosphorylation in both mature thymocytes and activated T-lymphocytes. Expressed on the surface of activated T-cells, B-cells, natural killer cells, neutrophils and platelets. Present also in eosinophils.

It is found in the cell membrane. Functionally, transmembrane protein expressed mainly on T-cells resident in mucosa that plays an essential role in immune cell homeostasis. Rapidly expressed on the surface of platelets, T-lymphocytes and NK cells upon activation by various stimuli, such as antigen recognition or cytokine signaling, stimulates different signaling pathways in different cell types. Negatively regulates Th17 cell differentiation through its carbohydrate dependent interaction with galectin-1/LGALS1 present on immature dendritic cells. Association of CD69 cytoplasmic tail with the JAK3/STAT5 signaling pathway regulates the transcription of RORgamma/RORC and, consequently, differentiation toward the Th17 lineage. Also acts via the S100A8/S100A9 complex present on peripheral blood mononuclear cells to promote the conversion of naive CD4 T-cells into regulatory T-cells. Acts as an oxidized low-density lipoprotein (oxLDL) receptor in CD4 T-lymphocytes and negatively regulates the inflammatory response by inducing the expression of PDCD1 through the activation of NFAT. Participates in adipose tissue-derived mesenchymal stem cells (ASCs)-mediated protection against P.aeruginosa infection. Mechanistically, specifically recognizes P.aeruginosa to promote ERK1 activation, followed by granulocyte-macrophage colony-stimulating factor (GM-CSF) and other inflammatory cytokines secretion. In eosinophils, induces IL-10 production through the ERK1/2 pathway. Negatively regulates the chemotactic responses of effector lymphocytes and dendritic cells (DCs) to sphingosine 1 phosphate/S1P by acting as a S1PR1 receptor agonist and facilitating the internalization and degradation of the receptor. The sequence is that of Early activation antigen CD69 (Cd69) from Mus musculus (Mouse).